Reading from the N-terminus, the 305-residue chain is Glutaminase (305 aa).

Residues Ser61, Asn113, Glu158, Asn165, Tyr189, Tyr241, and Val259 each contribute to the substrate site.

The protein belongs to the glutaminase family. Homotetramer.

It catalyses the reaction L-glutamine + H2O = L-glutamate + NH4(+). The polypeptide is Glutaminase (Alkaliphilus oremlandii (strain OhILAs) (Clostridium oremlandii (strain OhILAs))).